A 293-amino-acid chain; its full sequence is MDSGLRSLLSDHSRYVESFRLFLLNSTEHQCMQRFIDTQFPHIVSSIGKDKSVIDILGIGSGSGEIDLQMIGKIQSRHPGVAISNQIVEPSAEQIIGYKERVAKAPNLGAVSFSWHRQTSSEYERQVNEEKQMRSYDFIHMIQMLYYVKDVPATLRFFKSCLAPNGKLLIILVSGNSGWSMLWKKHGPQLPLNDLCLYVTAGDIAQMLSSMGARFQSYELPSDMDITECFIEGDRNGEMLLDFLTETCDFKRNAPADLREQILCDLKSPECSTTRDGKVIFNNNLSVIVVERD.

Position 28 (glutamate 28) interacts with substrate. Residues glycine 60, glutamate 89, glutamine 94, serine 120, and isoleucine 142 each coordinate S-adenosyl-L-methionine. Residue asparagine 283 coordinates substrate.

This sequence belongs to the class I-like SAM-binding methyltransferase superfamily. HNMT family. As to quaternary structure, monomer.

Its subcellular location is the cytoplasm. The catalysed reaction is histamine + S-adenosyl-L-methionine = N(tau)-methylhistamine + S-adenosyl-L-homocysteine + H(+). Inactivates histamine by N-methylation. Plays an important role in degrading histamine and in regulating the airway response to histamine. The sequence is that of Histamine N-methyltransferase (hnmt) from Xenopus tropicalis (Western clawed frog).